The primary structure comprises 268 residues: Cytochrome b-c1 complex subunit Rieske-5, mitochondrial (268 aa).

The N-terminal 56 residues, 1–56 (MLRIAGRKLSSSAAARSSSAFFTRNPFTFTDDSSSPTRSPSPTSLASQFLDQFRGF), are a transit peptide targeting the mitochondrion. The Mitochondrial matrix segment spans residues 57–105 (SSNSVSPAHQTGLVSDLPATVAAIKNPSSKIVYDDSNHERYPPGDPSKR). A helical transmembrane segment spans residues 106–128 (AFAYFVLTGGRFVYASLVRLLIL). The Mitochondrial intermembrane portion of the chain corresponds to 129–268 (KFVLSMSASK…FMEENKLLIG (140 aa)). The Rieske domain occupies 178–266 (INLANSVDLG…YSFMEENKLL (89 aa)). Cysteine 211, histidine 213, cysteine 230, and histidine 233 together coordinate [2Fe-2S] cluster. Cysteine 216 and cysteine 232 form a disulfide bridge.

It belongs to the Rieske iron-sulfur protein family. Component of the ubiquinol-cytochrome c oxidoreductase (cytochrome b-c1 complex, complex III, CIII), a multisubunit enzyme composed of 3 respiratory subunits cytochrome b, cytochrome c1 and Rieske protein, 2 core protein subunits, and several low-molecular weight protein subunits. The complex exists as an obligatory dimer and forms supercomplexes (SCs) in the inner mitochondrial membrane with cytochrome c oxidase (complex IV, CIV). It depends on [2Fe-2S] cluster as a cofactor. As to expression, high levels are seen in the flowers while a low level expression is seen in the roots, leaves and stems.

The protein localises to the mitochondrion inner membrane. It carries out the reaction a quinol + 2 Fe(III)-[cytochrome c](out) = a quinone + 2 Fe(II)-[cytochrome c](out) + 2 H(+)(out). Its function is as follows. Component of the ubiquinol-cytochrome c oxidoreductase, a multisubunit transmembrane complex that is part of the mitochondrial electron transport chain which drives oxidative phosphorylation. The respiratory chain contains 3 multisubunit complexes succinate dehydrogenase (complex II, CII), ubiquinol-cytochrome c oxidoreductase (cytochrome b-c1 complex, complex III, CIII) and cytochrome c oxidase (complex IV, CIV), that cooperate to transfer electrons derived from NADH and succinate to molecular oxygen, creating an electrochemical gradient over the inner membrane that drives transmembrane transport and the ATP synthase. The cytochrome b-c1 complex catalyzes electron transfer from ubiquinol to cytochrome c, linking this redox reaction to translocation of protons across the mitochondrial inner membrane, with protons being carried across the membrane as hydrogens on the quinol. In the process called Q cycle, 2 protons are consumed from the matrix, 4 protons are released into the intermembrane space and 2 electrons are passed to cytochrome c. The Rieske protein is a catalytic core subunit containing a [2Fe-2S] iron-sulfur cluster. It cycles between 2 conformational states during catalysis to transfer electrons from the quinol bound in the Q(0) site in cytochrome b to cytochrome c1. The sequence is that of Cytochrome b-c1 complex subunit Rieske-5, mitochondrial from Nicotiana tabacum (Common tobacco).